Consider the following 773-residue polypeptide: Polyribonucleotide nucleotidyltransferase (773 aa).

Residues Asp-490 and Asp-496 each coordinate Mg(2+). The KH domain occupies 557-616 (PKIDTITIPVDKIKVVIGKGGEQIDKIIAETGVKIDIDDEGLCSIFSSDQAAIDRAKEII). The 69-residue stretch at 626–694 (GEIYDAKVVR…DKGRVDASMR (69 aa)) folds into the S1 motif domain. A compositionally biased stretch (basic and acidic residues) spans 700–721 (PEGYVEPERKPRERRENGDRRK). The interval 700-773 (PEGYVEPERK…FPELSTKKPE (74 aa)) is disordered. The span at 739 to 748 (RNNQGNKVGN) shows a compositional bias: low complexity. The segment covering 751 to 773 (FELRERKSHIDEEFPELSTKKPE) has biased composition (basic and acidic residues).

It belongs to the polyribonucleotide nucleotidyltransferase family. The cofactor is Mg(2+).

It localises to the cytoplasm. The catalysed reaction is RNA(n+1) + phosphate = RNA(n) + a ribonucleoside 5'-diphosphate. Involved in mRNA degradation. Catalyzes the phosphorolysis of single-stranded polyribonucleotides processively in the 3'- to 5'-direction. This chain is Polyribonucleotide nucleotidyltransferase, found in Lactococcus lactis subsp. lactis (strain IL1403) (Streptococcus lactis).